Consider the following 412-residue polypeptide: POU domain, class 4, transcription factor 2 (412 aa).

Residues Leu-29–Pro-96 are disordered. A compositionally biased stretch (low complexity) spans Ser-31–Ala-53. 2 stretches are compositionally biased toward gly residues: residues Gly-54 to Arg-70 and Gly-78 to Ser-87. The tract at residues Cys-94 to His-240 is required for transcriptional activation. The POU-IV box motif lies at Arg-113–Ile-122. Positions Val-123 to Leu-191 are disordered. Positions Lys-127–Pro-138 are enriched in basic residues. Residues Pro-152–Ala-169 show a composition bias toward low complexity. Residues Thr-173–Pro-187 are compositionally biased toward basic residues. Residues His-174–His-188 carry the Nuclear speckle targeting signal motif. The segment at Ala-241–Ile-412 is required for DNA-binding and transcriptional repression. The POU-specific domain occupies Asp-253–Glu-330. Positions Lys-348 to Lys-407 form a DNA-binding region, homeobox.

This sequence belongs to the POU transcription factor family. Class-4 subfamily. Interacts with POU4F1; this interaction inhibits both POU4F1 DNA-binding and transcriptional activities. Interacts (C-terminus) with ESR1 (via DNA-binding domain); this interaction increases the estrogen receptor ESR1 transcriptional activity in a DNA- and ligand 17-beta-estradiol-independent manner. Interacts (via C-terminus) with TP53 (via N-terminus). Interacts with DLX1 (via homeobox DNA-binding domain); this interaction suppresses DLX1-mediated transcriptional activity in postnatal retina enhancing retinal ganglion cell (RGC) differentiation. Interacts with DLX2 (via homeobox DNA-binding domain); this interaction enhances RGC differentiation. Interacts (via C-terminus) with ISL1 (via C-terminus). Interacts with ISL2. Interacts with LHX2. In terms of tissue distribution, expressed in the heart, brain and spinal cord. Expressed in cardiomyocytes (at protein level). Expressed in brain and spinal cord. Expressed in dorsal root ganglion (RGD) neurons.

The protein localises to the nucleus. It localises to the nucleus speckle. Its subcellular location is the cytoplasm. Functionally, tissue-specific DNA-binding transcription factor involved in the development and differentiation of target cells. Functions either as activator or repressor modulating the rate of target gene transcription through RNA polymerase II enzyme in a promoter-dependent manner. Binds to the consensus octamer motif 5'-AT[A/T]A[T/A]T[A/T]A-3' of promoter of target genes. Plays a fundamental role in the gene regulatory network essential for retinal ganglion cell (RGC) differentiation. Binds to an octamer site to form a ternary complex with ISL1; cooperates positively with ISL1 and ISL2 to potentiate transcriptional activation of RGC target genes being involved in RGC fate commitment in the developing retina and RGC axon formation and pathfinding. Inhibits DLX1 and DLX2 transcriptional activities preventing DLX1- and DLX2-mediated ability to promote amacrine cell fate specification. In cooperation with TP53 potentiates transcriptional activation of BAX promoter activity increasing neuronal cell apoptosis. Negatively regulates BAX promoter activity in the absence of TP53. Acts as a transcriptional coactivator via its interaction with the transcription factor ESR1 by enhancing its effect on estrogen response element (ERE)-containing promoter. Antagonizes the transcriptional stimulatory activity of POU4F1 by preventing its binding to an octamer motif. Involved in TNFSF11-mediated terminal osteoclast differentiation. The protein is POU domain, class 4, transcription factor 2 of Rattus norvegicus (Rat).